Reading from the N-terminus, the 203-residue chain is Cupin-domain-containing oxidoreductase fogC (203 aa).

The segment at 105-171 is cupin-like domain; it reads DFAPGVESPL…GNGTLPGRML (67 aa).

Belongs to the virC family.

It functions in the pathway secondary metabolite biosynthesis. Its function is as follows. Cupin-domain-containing oxidoreductase; part of the gene cluster that mediates the biosynthesis of flavoglaucin and congeners (including aspergin, dihydroauroglaucin and auroglaucin), prenylated salicylaldehyde derivatives carrying a saturated or an unsaturated C-7 side chain. The PKS fogA releases the carboxylic acid (8E,10E,12E)-3,5,7-trihydroxytetradeca-8,10,12-trienoic acid as its product, as well as derivatives with one and two double bonds. FogA is indeed able to reduce the initial triketide, thus being at least partially responsible for the differently saturated heptyl side chains of flavoglaucin congeners. The oxidoreductases fogB, fogC and fogD modify the nascent polyketide in fogA-bound form and, together, fogA, fogB, fogC and fogD are necessary for the formation of the aromatic core and the cyclized PKS products are released as salicyl alcohols. In particular, fogB is responsible for oxidation of a hydroxyl group or reduction of remaining double bond(s) at the C-7 residue whereas fogD is probably involved in the reductive release of the modified PKS products. The cytochrome P450 monooxygenase fogE is then responsible for the hydroxylation at C-3 of the benzene ring. The fogE products are substrates of the prenyltransferase fogH and the prenylated benzyl alcohols are subsequently oxidized by the fogF to produce the final aryl aldehydes flavoglaucin and congeners. The short-chain dehydrogenase fogG does not seem to be involved in the biosynthesis of the prenylated salicylaldehyde derivatives. This chain is Cupin-domain-containing oxidoreductase fogC, found in Aspergillus ruber (strain CBS 135680).